The following is a 309-amino-acid chain: Histidine protein methyltransferase 1 homolog (309 aa).

Disordered stretches follow at residues 1–37 and 79–111; these read MSFKFNFQVDEDENDNGNNNEQNNEESKLDISEFDSS and KPFKGNQDNNNDNNVNSNDKNDNNNNNNNNNKD. Over residues 25 to 37 the composition is skewed to basic and acidic residues; sequence EESKLDISEFDSS. The segment covering 84 to 109 has biased composition (low complexity); the sequence is NQDNNNDNNVNSNDKNDNNNNNNNNN. S-adenosyl-L-methionine-binding positions include 132 to 136, Gly-159, 179 to 181, 209 to 211, and Ser-229; these read LWECS, QDY, and GDW.

This sequence belongs to the methyltransferase superfamily. METTL18 family.

The protein resides in the cytoplasm. Its subcellular location is the cytosol. The protein localises to the nucleus. It is found in the nucleolus. It catalyses the reaction L-histidyl-[protein] + S-adenosyl-L-methionine = N(tele)-methyl-L-histidyl-[protein] + S-adenosyl-L-homocysteine + H(+). Protein-L-histidine N-tele-methyltransferase that probably monomethylates RPL3. Through the methylation of RPL3 may regulate the dynamics of pre-rRNA processing, ribosome biogenesis, and translation. This is Histidine protein methyltransferase 1 homolog from Dictyostelium discoideum (Social amoeba).